The sequence spans 220 residues: Ribosomal RNA small subunit methyltransferase Nep1 (220 aa).

S-adenosyl-L-methionine is bound by residues G178, G183, and L196–L201.

Belongs to the class IV-like SAM-binding methyltransferase superfamily. RNA methyltransferase NEP1 family. As to quaternary structure, homodimer.

It carries out the reaction a pseudouridine in rRNA + S-adenosyl-L-methionine = an N(1)-methylpseudouridine in rRNA + S-adenosyl-L-homocysteine + H(+). Its function is as follows. Methyltransferase involved in ribosomal biogenesis. Specifically catalyzes the N1-methylation of the pseudouridine corresponding to position 914 in M.jannaschii 16S rRNA. The chain is Ribosomal RNA small subunit methyltransferase Nep1 from Thermococcus kodakarensis (strain ATCC BAA-918 / JCM 12380 / KOD1) (Pyrococcus kodakaraensis (strain KOD1)).